The primary structure comprises 293 residues: Large ribosomal subunit protein uL4 (293 aa).

Basic and acidic residues-rich tracts occupy residues 1–14 (MAEELKKTTKEKTP) and 33–55 (KTTEVKKADKLEKVSKPKSESTK). Disordered stretches follow at residues 1–72 (MAEE…IKSE) and 130–166 (QRQGTHSTKTRSEVSGGGKKPWKQKGTGRARAGSTRS).

This sequence belongs to the universal ribosomal protein uL4 family. As to quaternary structure, part of the 50S ribosomal subunit.

One of the primary rRNA binding proteins, this protein initially binds near the 5'-end of the 23S rRNA. It is important during the early stages of 50S assembly. It makes multiple contacts with different domains of the 23S rRNA in the assembled 50S subunit and ribosome. Its function is as follows. Forms part of the polypeptide exit tunnel. The sequence is that of Large ribosomal subunit protein uL4 from Mycoplasma mobile (strain ATCC 43663 / 163K / NCTC 11711) (Mesomycoplasma mobile).